The primary structure comprises 162 residues: Regulator of sigma D (162 aa).

This sequence belongs to the Rsd/AlgQ family. As to quaternary structure, interacts with RpoD.

The protein localises to the cytoplasm. Functionally, binds RpoD and negatively regulates RpoD-mediated transcription activation by preventing the interaction between the primary sigma factor RpoD with the catalytic core of the RNA polymerase and with promoter DNA. May be involved in replacement of the RNA polymerase sigma subunit from RpoD to RpoS during the transition from exponential growth to the stationary phase. This chain is Regulator of sigma D, found in Salmonella paratyphi A (strain ATCC 9150 / SARB42).